Consider the following 347-residue polypeptide: Metacaspase-2 (347 aa).

Residues 1–70 form a regulates substrate access to the active site region; sequence MCSLITQLCD…QPWVATPLPG (70 aa). Residue H158 is part of the active site. The Ca(2+) site is built by D173, D189, and D190. C213 is a catalytic residue. D220 contacts Ca(2+).

The protein belongs to the peptidase C14B family. As to quaternary structure, monomer. Auto-proteolytic cleavage of the propeptide after Lys-55 and between the large and small subunits after Lys-268 is required for catalytic activity towards large protein substrates but is dispensable towards small oligopeptide substrates. After processing, the propeptide and the large and small subunits remain associated by non-covalent bonds. In vivo, the unprocessed enzyme appears to be the predominant form.

Its subcellular location is the recycling endosome. Its activity is regulated as follows. Activated by Ca(2+). In response to calcium binding, the 280-loop, the 280-loop, a disordered loop consisting of residues 269-275, undergoes a conformational change which stabilizes substrates in the active site. The binding to the substrate triggers the release of the N-terminal region resulting in the activation of the enzyme. Proteolytic cleavage is required for catalytic activity towards large protein substrates. Functionally, cysteine protease that cleaves specifically after arginine or lysine residues. The sequence is that of Metacaspase-2 from Trypanosoma brucei brucei.